The following is a 1003-amino-acid chain: Cytosolic carboxypeptidase 3 (1003 aa).

Positions Met1 to Glu23 are disordered. Positions Tyr299 to Cys570 constitute a Peptidase M14 domain. Zn(2+)-binding residues include His364, Glu367, and His460. The Proton donor/acceptor role is filled by Glu534. Disordered regions lie at residues Lys642 to Glu662 and Lys911 to Thr1003. The segment covering Glu649 to Glu662 has biased composition (basic and acidic residues). Residues Pro922–Thr934 show a composition bias toward basic residues. A compositionally biased stretch (polar residues) spans Ala963–Pro976.

This sequence belongs to the peptidase M14 family. Requires Zn(2+) as cofactor.

Its subcellular location is the cytoplasm. It localises to the cytosol. It catalyses the reaction (L-glutamyl)(n+1)-gamma-L-glutamyl-L-glutamyl-[protein] + H2O = (L-glutamyl)(n)-gamma-L-glutamyl-L-glutamyl-[protein] + L-glutamate. In terms of biological role, metallocarboxypeptidase that mediates deglutamylation of tubulin and non-tubulin target proteins. Catalyzes the removal of polyglutamate side chains present on the gamma-carboxyl group of glutamate residues within the C-terminal tail of tubulin protein. Specifically cleaves tubulin long-side-chains, while it is not able to remove the branching point glutamate. Also catalyzes the removal of polyglutamate residues from the carboxy-terminus of non-tubulin proteins such as MYLK. May catalyze the hydrolysis of aspartate from the carboxy-terminus of target proteins. Does not show detyrosinase or deglycylase activities from the carboxy-terminus of target proteins. This Bos taurus (Bovine) protein is Cytosolic carboxypeptidase 3 (AGBL3).